The chain runs to 148 residues: Large ribosomal subunit protein bL9 (148 aa).

It belongs to the bacterial ribosomal protein bL9 family.

Its function is as follows. Binds to the 23S rRNA. This is Large ribosomal subunit protein bL9 from Syntrophobacter fumaroxidans (strain DSM 10017 / MPOB).